Consider the following 379-residue polypeptide: MTSVAKVYYSQTTQTESRPLMGPGIRRRRVLTKDGRSNVRMEHIADKRFLYLKDLWTTFIDMQWRYKLLLFSATFAGTWFLFGVVWYLVAVAHGDLLELDPPANHTPCVVQVHTLTGAFLFSLESQTTIGYGFRYISEECPLAIVLLIAQLVLTTILEIFITGTFLAKIARPKKRAETIRFSQHAVVASHNGKPCLMIRVANMRKSLLIGCQVTGKLLQTHQTKEGENIRLNQVNVTFQVDTASDSPFLILPLTFYHVVDETSPLKDLPLRSGEGDFELVLILSGTVESTSATCQVRTSYLPEEILWGYEFTPAISLSASGKYIADFSLFDQVVKVASPSGLRDSTVRYGDPEKLKLEESLREQAEKEGSALSVRISNV.

The Cytoplasmic portion of the chain corresponds to 1–61 (MTSVAKVYYS…LKDLWTTFID (61 aa)). Arg36 lines the 1,2-dioctanoyl-sn-glycero-3-phospho-(1D-myo-inositol-4,5-bisphosphate) pocket. A helical membrane pass occupies residues 62-88 (MQWRYKLLLFSATFAGTWFLFGVVWYL). Residues 89-114 (VAVAHGDLLELDPPANHTPCVVQVHT) are Extracellular-facing. Cysteines 108 and 140 form a disulfide. Residues 115–131 (LTGAFLFSLESQTTIGY) constitute an intramembrane region (discontinuously helical; Pore-forming). Positions 128–133 (TIGYGF) match the Selectivity filter motif. At 132-140 (GFRYISEEC) the chain is on the extracellular side. A helical transmembrane segment spans residues 141 to 166 (PLAIVLLIAQLVLTTILEIFITGTFL). Over 167–379 (AKIARPKKRA…SALSVRISNV (213 aa)) the chain is Cytoplasmic. 1,2-dioctanoyl-sn-glycero-3-phospho-(1D-myo-inositol-4,5-bisphosphate) is bound by residues Lys168, Arg171, and Lys173. 210-217 (GCQVTGKL) is an ATP binding site.

This sequence belongs to the inward rectifier-type potassium channel (TC 1.A.2.1) family. KCNJ10 subfamily. Homotetramer. In kidney cells, it forms heteromeric channels with Kir5.1/KCNJ16; this interaction is required for KCNJ16 localization to the basolateral membrane. Interacts with MAGI1, alone and possibly as a heteromer with KCNJ16; this interaction may facilitate KCNJ10/KCNJ16 potassium channel expression at the basolateral membrane in kidney cells. Interacts with PATJ. Expressed in kidney (at protein level). In the nephron, expressed in the distal convoluted tubule, the connecting tubule, the collecting duct and cortical thick ascending limbs.

The protein localises to the membrane. The protein resides in the basolateral cell membrane. The catalysed reaction is K(+)(in) = K(+)(out). Its activity is regulated as follows. Channel activity is strongly regulated by variations of cytosolic pH; channels are activated by alkaline and inhibited by acidic pH values. Inhibited by Ba(2+) and Cs(+). Activated by phosphatidylinositol 4,5 biphosphate (PtdIns(4,5)P2). May be responsible for potassium buffering action of glial cells in the brain. Inward rectifier potassium channels are characterized by a greater tendency to allow potassium to flow into the cell rather than out of it. Their voltage dependence is regulated by the concentration of extracellular potassium; as external potassium is raised, the voltage range of the channel opening shifts to more positive voltages. The inward rectification is mainly due to the blockage of outward current by internal magnesium. Can be blocked by extracellular barium and cesium. In the kidney, together with KCNJ16, mediates basolateral K(+) recycling in distal tubules; this process is critical for Na(+) reabsorption at the tubules. The sequence is that of ATP-sensitive inward rectifier potassium channel 10 from Homo sapiens (Human).